The following is a 796-amino-acid chain: ER degradation-enhancing alpha-mannosidase-like protein 1 (796 aa).

Positions 1-20 (MVCCLWVLLALLLHLDHVAC) are cleaved as a signal peptide. Asn-86 is a glycosylation site (N-linked (GlcNAc...) asparagine). Glu-372 functions as the Proton donor in the catalytic mechanism. Thr-495 provides a ligand contact to Ca(2+). N-linked (GlcNAc...) asparagine glycans are attached at residues Asn-517, Asn-672, and Asn-762.

This sequence belongs to the glycosyl hydrolase 47 family. Interacts with PDI1. Ca(2+) serves as cofactor.

Its subcellular location is the endoplasmic reticulum lumen. The catalysed reaction is Hydrolysis of terminal, non-reducing alpha-D-mannose residues in alpha-D-mannosides.. It functions in the pathway protein modification; protein glycosylation. Functionally, alpha-1,2-specific exomannosidase involved in endoplasmic reticulum-associated degradation (ERAD). Delivers misfolded glycoproteins to proteasomes. Forms a complex with PDI1 to process unfolded protein-bound Man8GlcNAc2 oligosaccharides to Man7GlcNAc2, promoting degradation in unfolded protein response. This chain is ER degradation-enhancing alpha-mannosidase-like protein 1 (MNL1), found in Saccharomyces cerevisiae (strain ATCC 204508 / S288c) (Baker's yeast).